A 603-amino-acid chain; its full sequence is Spastin (603 aa).

The interval 1–34 (MNSPGGRNNKKKPVTPAAETGPGPPTPPPPPAET) is disordered. Topologically, residues 1 to 54 (MNSPGGRNNKKKPVTPAAETGPGPPTPPPPPAETQVLLAPPSLHKRNLYLFSYP) are cytoplasmic. Residues 22 to 32 (PGPPTPPPPPA) show a composition bias toward pro residues. Positions 55 to 75 (LLAAFSLLRFLAFQLGLLFVW) form an intramembrane region, helical. The Cytoplasmic portion of the chain corresponds to 76–603 (FCERLSRRVM…WNKEFGDTTV (528 aa)). The MIT domain occupies 113–188 (YHQQAFQYIS…LMAKDRLQLL (76 aa)). The disordered stretch occupies residues 216–294 (GLLKPEKGAV…RTNKPTTPTT (79 aa)). Residues 219-231 (KPEKGAVPKKKDP) show a composition bias toward basic and acidic residues. Residues 281–294 (KNNTRTNKPTTPTT) are compositionally biased toward low complexity. 369-376 (GPPGNGKT) contacts ATP.

It belongs to the AAA ATPase family. Spastin subfamily. Homohexamer. The homohexamer is stabilized by ATP-binding. The homohexamer may adopt a ring conformation through which microtubules pass prior to being severed. Interacts with microtubules.

The protein localises to the membrane. The protein resides in the cytoplasm. Its subcellular location is the cytoskeleton. It is found in the microtubule organizing center. It localises to the centrosome. The protein localises to the perinuclear region. The protein resides in the nucleus. It catalyses the reaction n ATP + n H2O + a microtubule = n ADP + n phosphate + (n+1) alpha/beta tubulin heterodimers.. ATP-dependent microtubule severing protein that specifically recognizes and cuts microtubules that are polyglutamylated. Preferentially recognizes and acts on microtubules decorated with short polyglutamate tails: severing activity increases as the number of glutamates per tubulin rises from one to eight, but decreases beyond this glutamylation threshold. Microtubule severing promotes reorganization of cellular microtubule arrays and the release of microtubules from the centrosome following nucleation. Required for membrane traffic from the endoplasmic reticulum (ER) to the Golgi and for completion of the abscission stage of cytokinesis. Also plays a role in axon growth and the formation of axonal branches. This is Spastin from Xenopus tropicalis (Western clawed frog).